Here is a 579-residue protein sequence, read N- to C-terminus: Arginine--tRNA ligase (579 aa).

Positions Ala136 to His146 match the 'HIGH' region motif.

It belongs to the class-I aminoacyl-tRNA synthetase family. As to quaternary structure, monomer.

The protein localises to the cytoplasm. It catalyses the reaction tRNA(Arg) + L-arginine + ATP = L-arginyl-tRNA(Arg) + AMP + diphosphate. The sequence is that of Arginine--tRNA ligase from Anaplasma marginale (strain St. Maries).